A 1374-amino-acid chain; its full sequence is MAQTSTYSYTERKRIRKSFGSRDSVLKVPYLLQMQRDAYTAFLQADTAPQKRSNEGLQAAFNSAFPIVSHNGFVEMKFVEYNLAKPAFDVRECQTRGLTFASAVRAKVQLIIYDRESSTSQSKVVKEVKEQEVYMGEVPLMTDKGSFIINGTERVIVSQLHRSPGVFFEHDKGKTHSSGKLLFSARIIPYRGSWLDFEFDPKDILYFRVDRRRKMPVTILLKAIGLNPESILANFFVNDNFRLMDSGAQLEFVPERLRGEVARFDITDKAGKVIVAKDKRVTARHTRELEQSGTTHISVPEDFLIGRVVARNIVDGDTGEILAKANEELTEALLKKLRAAGVQDLQVIYTNELDQGAYISQTLRIDETVDEFAARVAIYRMMRPGEPPTEDAVQALFQRLFYNPDTYDLSRVGRMKFNAKIGRDEATGPMVLSNDDILAVVKILVDLRNGKGEVDDIDHLGNRRVRCVGELAENQYRTGLARIEKAVKERLGQAEQEPLMPHDLINSKPISAALKEFFGASQLSQFMDQTNPLAEITHKRRVSALGPGGLTRERAGFEVRDVHVTHYGRVCPIETPEGPNIGLINSLALYARLNEYGFIETPYRRVVDGKVTMEIDYLSAIEEGKYIIAQANATLDAEGRLTGDLVSAREKGESTLVSADRVQYMDVSPAQIVSVAASLVPFLEHDDANRALMGANMSRQAVPVLRPEKPMVGTGIERVAAVDSGTVVTANRGGVVDYVDATRIVVRVNDDEAVAGEVGVDIYNLIKYQRSNQNTNIHQRPIVKKGDKLAKGDVIADGASTDLGEIAIGQNMLIAFMPWNGYNFEDSILISERVVAEDRYTSIHIEELVVMARDTKLGAEEITRDIPNLSEQQLNRLDESGIIYVGAEVQPGDTLVGKVTPKGETTLTPEEKLLRAIFGEKASDVKDTSLRVDQGSQGTVIDVQVFTREGIQRDKRAQQIIDDELKRFRLDLNDQLRIVEADAFDRIEKLLTGRVANGGPQKLAKGTKIDKAYLASVEKFHWFDIRPAEEEVATQLESIKNALEQTRHSFDLAFEEKRKKLTQGDELPAGVLKMVKVYLAVKRRLQPGDKMAGRHGNKGVVSKIVPVEDMPYMADGTPADIVLNPLGVPSRMNIGQVLEVHLGWAGKGMGQRIGDMLQREAKTAELRKFLEEIYNSRGRKEDLSQLSDDEILAMARELTSGVPFASPVFDGASEEEIKDMLKLAYPDDLAQAKGLTETRTQAYLYDGRTGERFERPTTVGYMHYLKLHHLVDDKMHARSTGPYSLVTQQPLGGKAQFGGQRFGEMEVWALEAYGAAYVLQEMLTVKSDDVQGRTKVYENIVKGEHAIEAGMPESFNVLVKEIRSLGLDIELERS.

This sequence belongs to the RNA polymerase beta chain family. As to quaternary structure, the RNAP catalytic core consists of 2 alpha, 1 beta, 1 beta' and 1 omega subunit. When a sigma factor is associated with the core the holoenzyme is formed, which can initiate transcription.

The catalysed reaction is RNA(n) + a ribonucleoside 5'-triphosphate = RNA(n+1) + diphosphate. In terms of biological role, DNA-dependent RNA polymerase catalyzes the transcription of DNA into RNA using the four ribonucleoside triphosphates as substrates. The chain is DNA-directed RNA polymerase subunit beta from Acidovorax sp. (strain JS42).